A 420-amino-acid chain; its full sequence is Glucose-1-phosphate adenylyltransferase (420 aa).

Alpha-D-glucose 1-phosphate contacts are provided by residues Y107, G172, 187-188 (EK), and S205.

This sequence belongs to the bacterial/plant glucose-1-phosphate adenylyltransferase family. As to quaternary structure, homotetramer.

It catalyses the reaction alpha-D-glucose 1-phosphate + ATP + H(+) = ADP-alpha-D-glucose + diphosphate. Its pathway is glycan biosynthesis; glycogen biosynthesis. In terms of biological role, involved in the biosynthesis of ADP-glucose, a building block required for the elongation reactions to produce glycogen. Catalyzes the reaction between ATP and alpha-D-glucose 1-phosphate (G1P) to produce pyrophosphate and ADP-Glc. This chain is Glucose-1-phosphate adenylyltransferase, found in Rhizobium radiobacter (Agrobacterium tumefaciens).